Consider the following 414-residue polypeptide: MSGIIATYLIHDDSHNLEKKAEQIAIGLTIGSWTHLPHLLQEQLKQHKGNVIHIEALDEQEHINSYLGKKVSRGLIKIHYPSLNFSPDLPAILTTTFGKLSLDGEIKLIDLTFSDELKKQFPGPKFGIEGIRNLLQVQDRPLLMSIFKGMIGRNIGYLKTQLRDQAIGGVDIVKDDEILFENSLTPLIKRIESGKEVLQSVYETYGHKTLYAVNLTGRTYDLKENAKRAVVAGADILLFNVFSYGLDVLQALVEDDEIPIPIMAHPAVSGAYSSSKLYGFSSPLLLGKLLRYAGADFSLFPSPYGNVALEKEEALLITAALTEEDHYFKKSFSVPSAGIHPGFVPFILRDFGKDVVINAGGGIHGHPNGAQGGGKAFRAAIEATLQGKPLHEVDEINLHSALQIWGNPSHEVKL.

Lysine 99 functions as the Proton acceptor in the catalytic mechanism. Substrate is bound by residues lysine 148, 174-177, histidine 265, glycine 338, and 360-361; these read KDDE and GG. Residues lysine 174, aspartate 176, and glutamate 177 each coordinate Mg(2+). Lysine 174 carries the post-translational modification N6-carboxylysine.

It belongs to the RuBisCO large chain family. Type IV subfamily. In terms of assembly, homodimer. The cofactor is Mg(2+).

It carries out the reaction 5-methylsulfanyl-2,3-dioxopentyl phosphate = 2-hydroxy-5-methylsulfanyl-3-oxopent-1-enyl phosphate. The protein operates within amino-acid biosynthesis; L-methionine biosynthesis via salvage pathway; L-methionine from S-methyl-5-thio-alpha-D-ribose 1-phosphate: step 3/6. In terms of biological role, catalyzes the enolization of 2,3-diketo-5-methylthiopentyl-1-phosphate (DK-MTP-1-P) into 2-hydroxy-3-keto-5-methylthiopentenyl-1-phosphate (HK-MTPenyl-1-P). This chain is 2,3-diketo-5-methylthiopentyl-1-phosphate enolase, found in Bacillus mycoides (strain KBAB4) (Bacillus weihenstephanensis).